Consider the following 224-residue polypeptide: LexA repressor (224 aa).

The H-T-H motif DNA-binding region spans 29-49; the sequence is RAEIARALGFRSPNAAEDHLK. Catalysis depends on for autocatalytic cleavage activity residues serine 142 and lysine 179.

This sequence belongs to the peptidase S24 family. As to quaternary structure, homodimer.

The catalysed reaction is Hydrolysis of Ala-|-Gly bond in repressor LexA.. Represses a number of genes involved in the response to DNA damage (SOS response), including recA and lexA. In the presence of single-stranded DNA, RecA interacts with LexA causing an autocatalytic cleavage which disrupts the DNA-binding part of LexA, leading to derepression of the SOS regulon and eventually DNA repair. The chain is LexA repressor from Bordetella petrii (strain ATCC BAA-461 / DSM 12804 / CCUG 43448).